Here is a 630-residue protein sequence, read N- to C-terminus: Replication protein A 70 kDa DNA-binding subunit B (630 aa).

Residues 200–282 (IIKVRVTSKG…KTVHNDYEMT (83 aa)) constitute a DNA-binding region (OB). The segment at 496–516 (CKTCNKKVTEAIGSGYWCEGC) adopts a C4-type zinc-finger fold.

This sequence belongs to the replication factor A protein 1 family. Heterotrimer of RPA1, RPA2 and RPA3 (canonical replication protein A complex). Interacts with RPA2A. In terms of tissue distribution, expressed in root tips, roots, shoot apical meristem (SAM) and young leaves, and at lower levels in mature leaves, flag leaves and ears.

Its subcellular location is the nucleus. Component of the replication protein A complex (RPA) required for DNA recombination, repair and replication. The activity of RPA is mediated by single-stranded DNA binding and protein interactions. Probably involved in repair of double-strand DNA breaks (DSBs) induced by genotoxic stresses. In Oryza sativa subsp. japonica (Rice), this protein is Replication protein A 70 kDa DNA-binding subunit B (RPA1B).